The primary structure comprises 494 residues: NAD(+) hydrolase ThsA (494 aa).

The Deacetylase sirtuin-type domain maps to 11 to 295; that stretch reads ATDKEVLIKE…TILQRYCRSK (285 aa). A30, D119, and H157 together coordinate NAD(+). H157 functions as the Proton acceptor in the catalytic mechanism. The segment at 296–494 is SLOG (STALD) domain, binds 3'cADPR; it reads ILISGSAVEY…KIITALRAGR (199 aa). 3'cADPR is bound by residues G300, S301, L339, F370, R388, K405, G416, and E420.

The protein belongs to the soluble Thoeris ThsA family. As to quaternary structure, homotetramer.

Its subcellular location is the cytoplasm. It catalyses the reaction NAD(+) + H2O = ADP-D-ribose + nicotinamide + H(+). Its activity is regulated as follows. Probably activated by a signal molecule generated by endogenous ThsB1 and/or ThsB2. Can also be activated by the signal generated by ThsB of B.cereus. The activating molecule might be 3' cyclic ADP-D-ribose (3'cADPR). Its function is as follows. Probable NAD(+) hydrolyzing component (NADase) of the Thoeris antiviral defense system, composed of ThsA, TIR1 (thsB1) and TIR2 (thsB2). Activated by a signal molecule generated by endogenous TIR1, TIR2 or ThsB from B.cereus. After activation it binds and hydrolyzes NAD(+), leading to cell death and inhibition of phage replication. Expression of Thoeris in B.subtilis (strain BEST7003) confers resistance to phages phi29, phi3T, SPBeta, SBSphi11, SBSphi13, SBSphiJ, SPO1 and SPR but not SBSphiC. The TIR paralogs confer overlapping resistance to different phages. This is NAD(+) hydrolase ThsA from Cytobacillus dafuensis (Bacillus dafuensis).